The following is a 420-amino-acid chain: Tyrosine--tRNA ligase (420 aa).

L-tyrosine is bound at residue Tyr-33. Residues Pro-38 to His-47 carry the 'HIGH' region motif. Residues Tyr-167 and Gln-171 each contribute to the L-tyrosine site. Residues Lys-227–Ser-231 carry the 'KMSKS' region motif. Lys-230 contributes to the ATP binding site. In terms of domain architecture, S4 RNA-binding spans Pro-352–Tyr-418.

It belongs to the class-I aminoacyl-tRNA synthetase family. TyrS type 1 subfamily. In terms of assembly, homodimer.

Its subcellular location is the cytoplasm. The catalysed reaction is tRNA(Tyr) + L-tyrosine + ATP = L-tyrosyl-tRNA(Tyr) + AMP + diphosphate + H(+). Functionally, catalyzes the attachment of tyrosine to tRNA(Tyr) in a two-step reaction: tyrosine is first activated by ATP to form Tyr-AMP and then transferred to the acceptor end of tRNA(Tyr). The sequence is that of Tyrosine--tRNA ligase from Corynebacterium diphtheriae (strain ATCC 700971 / NCTC 13129 / Biotype gravis).